Consider the following 307-residue polypeptide: Homoserine kinase (307 aa).

ATP is bound at residue 91 to 101; that stretch reads PLARGLGSSAA.

It belongs to the GHMP kinase family. Homoserine kinase subfamily.

It is found in the cytoplasm. The catalysed reaction is L-homoserine + ATP = O-phospho-L-homoserine + ADP + H(+). Its pathway is amino-acid biosynthesis; L-threonine biosynthesis; L-threonine from L-aspartate: step 4/5. Its function is as follows. Catalyzes the ATP-dependent phosphorylation of L-homoserine to L-homoserine phosphate. In Deinococcus radiodurans (strain ATCC 13939 / DSM 20539 / JCM 16871 / CCUG 27074 / LMG 4051 / NBRC 15346 / NCIMB 9279 / VKM B-1422 / R1), this protein is Homoserine kinase.